The chain runs to 262 residues: Small ribosomal subunit protein mS23 (262 aa).

The segment covering 242–254 has biased composition (acidic residues); that stretch reads AAEEQETSLDDDA. A disordered region spans residues 242 to 262; it reads AAEEQETSLDDDATEKVAVAA.

The protein belongs to the mitochondrion-specific ribosomal protein mS23 family. In terms of assembly, component of the mitochondrial small ribosomal subunit.

Its subcellular location is the mitochondrion. The sequence is that of Small ribosomal subunit protein mS23 (rsm25) from Aspergillus niger (strain ATCC MYA-4892 / CBS 513.88 / FGSC A1513).